Consider the following 178-residue polypeptide: Caveolin-1 (178 aa).

S2 is subject to N-acetylserine. Position 2 is a phosphoserine (S2). Positions 2-94 (SGGKYVDSEG…WKASFTTFTV (93 aa)) are required for homooligomerization. The Cytoplasmic portion of the chain corresponds to 2 to 104 (SGGKYVDSEG…TKYWFYRLLS (103 aa)). Position 5 is an N6-acetyllysine; alternate (K5). A Glycyl lysine isopeptide (Lys-Gly) (interchain with G-Cter in ubiquitin); alternate cross-link involves residue K5. The residue at position 6 (Y6) is a Phosphotyrosine. S9 bears the Phosphoserine mark. Y14 carries the post-translational modification Phosphotyrosine; by ABL1. The residue at position 25 (Y25) is a Phosphotyrosine. Residues K26 and K30 each participate in a glycyl lysine isopeptide (Lys-Gly) (interchain with G-Cter in ubiquitin) cross-link. S37 carries the post-translational modification Phosphoserine. Residues K39, K47, and K57 each participate in a glycyl lysine isopeptide (Lys-Gly) (interchain with G-Cter in ubiquitin) cross-link. An interaction with CAVIN3 region spans residues 82-94 (DGIWKASFTTFTV). The helical intramembrane region spans 105 to 125 (ALFGIPMALIWGIYFAILSFL). Residues 126 to 178 (HIWAVVPCIKSFLIEIQCISRVYSIYVHTVCDPLFEAVGKIFSNVRINLQKEI) are Cytoplasmic-facing. The tract at residues 131 to 142 (VPCIKSFLIEIQ) is interacts with SPRY1, SPRY2, SPRY3 and SPRY4. 3 S-palmitoyl cysteine lipidation sites follow: C133, C143, and C156. The segment at 149–160 (SIYVHTVCDPLF) is interacts with SPRY1, SPRY2, and SPRY4. Positions 167 to 178 (FSNVRINLQKEI) are interacts with SPRY1, SPRY2, SPRY3 and SPRY4.

The protein belongs to the caveolin family. In terms of assembly, homooligomer. Interacts with GLIPR2. Interacts with NOSTRIN. Interacts with SNAP25 and STX1A. Interacts (via the N-terminus) with DPP4; the interaction is direct. Interacts with CTNNB1, CDH1 and JUP. Interacts with PACSIN2; this interaction induces membrane tubulation. Interacts with SLC7A9. Interacts with BMX and BTK. Interacts with TGFBR1. Interacts with CAVIN3 (via leucine-zipper domain) in a cholesterol-sensitive manner. Interacts with CAVIN1. Interacts with EHD2 in a cholesterol-dependent manner. Forms a ternary complex with UBXN6 and VCP; mediates CAV1 targeting to lysosomes for degradation. Interacts with ABCG1; this interaction regulates ABCG1-mediated cholesterol efflux. Interacts with NEU3; this interaction enhances NEU3 sialidase activity within caveola. Interacts (via C-terminus) with SPRY1, SPRY2 (via C-terminus), SPRY3, and SPRY4. Interacts with IGFBP5; this interaction allows trafficking of IGFBP5 from the plasma membrane to the nucleus. Post-translationally, phosphorylated at Tyr-14 by ABL1 in response to oxidative stress. Ubiquitinated. Undergo monoubiquitination and multi- and/or polyubiquitination. Monoubiquitination of N-terminal lysines promotes integration in a ternary complex with UBXN6 and VCP which promotes oligomeric CAV1 targeting to lysosomes for degradation. Ubiquitinated by ZNRF1; leading to degradation and modulation of the TLR4-mediated immune response.

It is found in the golgi apparatus membrane. It localises to the cell membrane. The protein localises to the membrane. The protein resides in the caveola. Its subcellular location is the membrane raft. Functionally, may act as a scaffolding protein within caveolar membranes. Forms a stable heterooligomeric complex with CAV2 that targets to lipid rafts and drives caveolae formation. Mediates the recruitment of CAVIN proteins (CAVIN1/2/3/4) to the caveolae. Interacts directly with G-protein alpha subunits and can functionally regulate their activity. Involved in the costimulatory signal essential for T-cell receptor (TCR)-mediated T-cell activation. Its binding to DPP4 induces T-cell proliferation and NF-kappa-B activation in a T-cell receptor/CD3-dependent manner. Recruits CTNNB1 to caveolar membranes and may regulate CTNNB1-mediated signaling through the Wnt pathway. Negatively regulates TGFB1-mediated activation of SMAD2/3 by mediating the internalization of TGFBR1 from membrane rafts leading to its subsequent degradation. Binds 20(S)-hydroxycholesterol (20(S)-OHC). In Pongo abelii (Sumatran orangutan), this protein is Caveolin-1 (CAV1).